Consider the following 526-residue polypeptide: Major facilitator superfamily domain-containing protein 4A (526 aa).

12 consecutive transmembrane segments (helical) span residues 21-41 (LTYW…GPTI), 55-75 (ITLV…IGGF), 84-104 (LSSL…IPLC), 107-127 (LLML…IDTI), 142-162 (VFLQ…PLIA), 215-235 (YAFW…FVLV), 297-317 (LSFF…DGIV), 341-361 (GYLT…AIPL), 377-397 (GVIV…FLFI), 401-421 (CLGL…EDIL), 430-450 (VLVT…GSVM), and 458-478 (FLLC…FLYF).

Belongs to the major facilitator superfamily.

Its subcellular location is the membrane. This is Major facilitator superfamily domain-containing protein 4A (mfsd4a) from Danio rerio (Zebrafish).